The chain runs to 430 residues: Potassium channel subfamily K member 12 (430 aa).

Residues 1–38 lie on the Cytoplasmic side of the membrane; it reads MSSRSPRPPPRRSRRRLPRPSCCCCCCRRSHLNEDTGR. An ER retention/retrieval signal region spans residues 11-16; that stretch reads RRSRRR. Residues 39 to 59 traverse the membrane as a helical segment; it reads FVLLAALIGLYLVAGATVFSA. N-linked (GlcNAc...) asparagine glycosylation is present at asparagine 78. Positions 114 to 134 form an intramembrane region, pore-forming; sequence WDFPGAFYFVGTVVSTIGFGM. Threonine 129, isoleucine 130, and glycine 131 together coordinate K(+). The selectivity filter 1 stretch occupies residues 129 to 134; the sequence is TIGFGM. A helical membrane pass occupies residues 145 to 165; that stretch reads FLIAYGLFGCAGTILFFNLFL. At 166–212 the chain is on the cytoplasmic side; sequence ERIISLLAFIMRACRERQLRRSGLLPATFRRGSALSEADSLAGWKPS. Residues 213-233 traverse the membrane as a helical segment; sequence VYHVLLILGLFAVLLSCCASA. The segment at residues 243–263 is an intramembrane region (pore-forming); the sequence is YVDSLYFCFVTFSTIGFGDLV. K(+) contacts are provided by threonine 256, isoleucine 257, glycine 258, and phenylalanine 259. Positions 256–261 are selectivity filter 2; it reads TIGFGD. A helical membrane pass occupies residues 282 to 302; it reads LFILLGVCCIYSLFNVISILI. The Cytoplasmic segment spans residues 303 to 430; that stretch reads KQVLNWMLRK…NRLAETSASR (128 aa).

This sequence belongs to the two pore domain potassium channel (TC 1.A.1.8) family. Homodimer. Heterodimer with KCNK13.

It localises to the cell membrane. The protein localises to the endoplasmic reticulum membrane. It carries out the reaction K(+)(in) = K(+)(out). In terms of biological role, k(+) channel subunit that may homo- and heterodimerize to form functional channels with distinct regulatory and gating properties. Can heterodimerize with KCNK13 subunit to conduct K(+) outward rectifying currents at the plasma membrane. The homodimers are mainly retained in the endoplasmic reticulum compartment and may be targeted to the cell surface upon phosphorylation or other activation signals yet to be elucidated. This chain is Potassium channel subfamily K member 12, found in Homo sapiens (Human).